The following is a 139-amino-acid chain: Small ribosomal subunit protein uS9 (139 aa).

The protein belongs to the universal ribosomal protein uS9 family.

This is Small ribosomal subunit protein uS9 from Coxiella burnetii (strain CbuK_Q154) (Coxiella burnetii (strain Q154)).